A 146-amino-acid chain; its full sequence is Large ribosomal subunit protein uL15 (146 aa).

Basic and acidic residues predominate over residues 1-10; sequence MTIKLHDLKP. A disordered region spans residues 1–52; sequence MTIKLHDLKPARGSKTPRTRVGRGEGSKGKTAGRGTKGTKARKNVPVTFEGG.

The protein belongs to the universal ribosomal protein uL15 family. As to quaternary structure, part of the 50S ribosomal subunit.

In terms of biological role, binds to the 23S rRNA. The sequence is that of Large ribosomal subunit protein uL15 from Mycolicibacterium paratuberculosis (strain ATCC BAA-968 / K-10) (Mycobacterium paratuberculosis).